The chain runs to 351 residues: Probable cell division control protein 7 homolog 2 (351 aa).

One can recognise a Protein kinase domain in the interval 21–341 (YTPIEKIGEG…ASDALSHPFF (321 aa)). Residues 27-35 (IGEGSFSVV) and K50 contribute to the ATP site. The Proton acceptor role is filled by D137.

The protein belongs to the protein kinase superfamily. Ser/Thr protein kinase family. CDC7 subfamily. It depends on Mg(2+) as a cofactor.

The catalysed reaction is L-seryl-[protein] + ATP = O-phospho-L-seryl-[protein] + ADP + H(+). The enzyme catalyses L-threonyl-[protein] + ATP = O-phospho-L-threonyl-[protein] + ADP + H(+). Its function is as follows. Serine/threonine-protein kinase. Needed for the initiation of DNA synthesis during mitosis as well as for synaptonemal complex formation and commitment to recombination during meiosis. This is Probable cell division control protein 7 homolog 2 (CDC7-2) from Encephalitozoon cuniculi (strain GB-M1) (Microsporidian parasite).